We begin with the raw amino-acid sequence, 422 residues long: Enolase (422 aa).

Residue Gln161 participates in (2R)-2-phosphoglycerate binding. The Proton donor role is filled by Glu203. Mg(2+) contacts are provided by Asp240, Glu283, and Asp310. (2R)-2-phosphoglycerate contacts are provided by Lys335, Arg364, Ser365, and Lys386. The Proton acceptor role is filled by Lys335.

The protein belongs to the enolase family. Mg(2+) is required as a cofactor.

The protein resides in the cytoplasm. The protein localises to the secreted. Its subcellular location is the cell surface. It carries out the reaction (2R)-2-phosphoglycerate = phosphoenolpyruvate + H2O. Its pathway is carbohydrate degradation; glycolysis; pyruvate from D-glyceraldehyde 3-phosphate: step 4/5. Catalyzes the reversible conversion of 2-phosphoglycerate (2-PG) into phosphoenolpyruvate (PEP). It is essential for the degradation of carbohydrates via glycolysis. The chain is Enolase from Deinococcus radiodurans (strain ATCC 13939 / DSM 20539 / JCM 16871 / CCUG 27074 / LMG 4051 / NBRC 15346 / NCIMB 9279 / VKM B-1422 / R1).